We begin with the raw amino-acid sequence, 910 residues long: Valine--tRNA ligase (910 aa).

Residues 45–55 (PNVTGSLHMGH) carry the 'HIGH' region motif. The 'KMSKS' region motif lies at 554 to 558 (KMSKS). ATP is bound at residue K557. Residues 842–910 (DLQAEAARLA…TAESRIRDAS (69 aa)) adopt a coiled-coil conformation.

It belongs to the class-I aminoacyl-tRNA synthetase family. ValS type 1 subfamily. As to quaternary structure, monomer.

Its subcellular location is the cytoplasm. The catalysed reaction is tRNA(Val) + L-valine + ATP = L-valyl-tRNA(Val) + AMP + diphosphate. Its function is as follows. Catalyzes the attachment of valine to tRNA(Val). As ValRS can inadvertently accommodate and process structurally similar amino acids such as threonine, to avoid such errors, it has a 'posttransfer' editing activity that hydrolyzes mischarged Thr-tRNA(Val) in a tRNA-dependent manner. In Brucella suis biovar 1 (strain 1330), this protein is Valine--tRNA ligase.